A 308-amino-acid chain; its full sequence is Ornithine carbamoyltransferase (308 aa).

Residues 55–58, Gln82, Arg106, and 133–136 contribute to the carbamoyl phosphate site; these read STRT and HPCQ. L-ornithine-binding positions include Asn164, Asp227, and 231 to 232; that span reads SM. Carbamoyl phosphate contacts are provided by residues 267–268 and Arg295; that span reads CL.

Belongs to the aspartate/ornithine carbamoyltransferase superfamily. OTCase family.

It is found in the cytoplasm. It catalyses the reaction carbamoyl phosphate + L-ornithine = L-citrulline + phosphate + H(+). It functions in the pathway amino-acid biosynthesis; L-arginine biosynthesis; L-arginine from L-ornithine and carbamoyl phosphate: step 1/3. Functionally, reversibly catalyzes the transfer of the carbamoyl group from carbamoyl phosphate (CP) to the N(epsilon) atom of ornithine (ORN) to produce L-citrulline. In Prochlorococcus marinus (strain MIT 9312), this protein is Ornithine carbamoyltransferase.